The sequence spans 370 residues: Actin-related protein 2/3 complex subunit 1A (370 aa).

WD repeat units follow at residues 6–45 (FLLEPITCHAWNRDRTQIALSPNNHEVHIYKKNGSQWTKA), 50–89 (EHNGHITGIDWAPKSDRIVTCGADRNAYVWSQKDGIWKPT), 140–179 (PIRSTVLSLDWHPNNVLLAAGSCDFKCRVFSAYIKEVDEK), 202–241 (GTGGWVHGVSFSASGNRLAWVSHDSTVSVADASKSVQVST), 244–284 (TEFL…TFVS), and 322–365 (LHQN…SSIQ).

Belongs to the WD repeat ARPC1 family. Probable component of the Arp2/3 complex in which it may replace ARPC1B.

The protein localises to the cytoplasm. The protein resides in the cytoskeleton. It localises to the nucleus. Probably functions as a component of the Arp2/3 complex which is involved in regulation of actin polymerization and together with an activating nucleation-promoting factor (NPF) mediates the formation of branched actin networks. In addition to its role in the cytoplasmic cytoskeleton, the Arp2/3 complex also promotes actin polymerization in the nucleus, thereby regulating gene transcription and repair of damaged DNA. The polypeptide is Actin-related protein 2/3 complex subunit 1A (Arpc1a) (Mus musculus (Mouse)).